Consider the following 636-residue polypeptide: Methionine--tRNA ligase (636 aa).

A 'HIGH' region motif is present at residues 12-22; sequence YYVNGDPHVGS. Zn(2+) is bound by residues Cys127, Cys130, Cys145, and Cys148. Residues 298-302 carry the 'KMSKS' region motif; sequence KMSKS. Lys301 lines the ATP pocket. The region spanning 535–636 is the tRNA-binding domain; that stretch reads EFNKIEIKVV…KTVEAGAIVS (102 aa).

It belongs to the class-I aminoacyl-tRNA synthetase family. MetG type 2A subfamily. As to quaternary structure, homodimer. The cofactor is Zn(2+).

It localises to the cytoplasm. It carries out the reaction tRNA(Met) + L-methionine + ATP = L-methionyl-tRNA(Met) + AMP + diphosphate. In terms of biological role, is required not only for elongation of protein synthesis but also for the initiation of all mRNA translation through initiator tRNA(fMet) aminoacylation. The sequence is that of Methionine--tRNA ligase (metG) from Fusobacterium nucleatum subsp. nucleatum (strain ATCC 25586 / DSM 15643 / BCRC 10681 / CIP 101130 / JCM 8532 / KCTC 2640 / LMG 13131 / VPI 4355).